Reading from the N-terminus, the 302-residue chain is Sulfate adenylyltransferase subunit 2 (302 aa).

A disordered region spans residues 280 to 302; sequence RQGRLIDSDQSASMEQKKRQGYF.

Belongs to the PAPS reductase family. CysD subfamily. As to quaternary structure, heterodimer composed of CysD, the smaller subunit, and CysN.

The catalysed reaction is sulfate + ATP + H(+) = adenosine 5'-phosphosulfate + diphosphate. It functions in the pathway sulfur metabolism; hydrogen sulfide biosynthesis; sulfite from sulfate: step 1/3. Functionally, with CysN forms the ATP sulfurylase (ATPS) that catalyzes the adenylation of sulfate producing adenosine 5'-phosphosulfate (APS) and diphosphate, the first enzymatic step in sulfur assimilation pathway. APS synthesis involves the formation of a high-energy phosphoric-sulfuric acid anhydride bond driven by GTP hydrolysis by CysN coupled to ATP hydrolysis by CysD. The polypeptide is Sulfate adenylyltransferase subunit 2 (Shewanella sp. (strain ANA-3)).